Reading from the N-terminus, the 704-residue chain is ATP-dependent DNA helicase Hel308 (704 aa).

Residues glutamine 31 and 49-56 (SPTASGKT) each bind ATP. The 165-residue stretch at 36 to 200 (RKGLLDGKRL…WLNAELVATN (165 aa)) folds into the Helicase ATP-binding domain. Residues 148 to 151 (DEFH) carry the DEAH box motif. The Helicase C-terminal domain maps to 235-439 (AIIAYTLDIV…AFYSFLISII (205 aa)). The interval 366–645 (VVGYMDLIPV…LHARVKDGVK (280 aa)) is binds Hjc. Residues 432–644 (YSFLISIIAS…ELHARVKDGV (213 aa)) are required for helicase activity. An inhibits intrinsic ATPase, and helicase region spans residues 646–704 (PELIELVKIPGIGRVRARLLYQHDIKKPEDIVLNPEKVKQLLGPNLGEKIVREAARTIA).

Belongs to the helicase family. Hel308 subfamily. In terms of assembly, monomer; forms a 1:2 complex with Hjc, which may form a complex with Holliday junction DNA. Requires Mg(2+) as cofactor.

The enzyme catalyses Couples ATP hydrolysis with the unwinding of duplex DNA by translocating in the 3'-5' direction.. It catalyses the reaction ATP + H2O = ADP + phosphate + H(+). The catalysed reaction is Couples ATP hydrolysis with the unwinding of duplex DNA at the replication fork by translocating in the 5'-3' direction. This creates two antiparallel DNA single strands (ssDNA). The leading ssDNA polymer is the template for DNA polymerase III holoenzyme which synthesizes a continuous strand.. Helicase activity is inhibited by Hjc and by PCNA123 and PCNA323. Functionally, an ATP, Mg(2+)-dependent DNA 3'-5' and 5'-3' helicase that may be involved in repair of stalled replication forks. Stimulated by both ss and dsDNA. Unwinds both leading and lagging strands in replication fork structures, unlike orthologs in P.furiosus and M.thermautotrophicus which only unwind the lagging strand and only have 3'-5' helicase activity. Preferentially binds dsDNA with overhangs or branched DNA. Able to anneal DNA substrates that could form a replication fork-like structure, has replication fork reversal activity (at least in vitro). The sequence is that of ATP-dependent DNA helicase Hel308 from Sulfurisphaera tokodaii (strain DSM 16993 / JCM 10545 / NBRC 100140 / 7) (Sulfolobus tokodaii).